The sequence spans 158 residues: Disease resistance response protein Pi49 (158 aa).

This sequence belongs to the BetVI family.

The sequence is that of Disease resistance response protein Pi49 (DRR49A) from Pisum sativum (Garden pea).